Consider the following 495-residue polypeptide: UDP-N-acetylmuramoyl-L-alanyl-D-glutamate--2,6-diaminopimelate ligase (495 aa).

UDP-N-acetyl-alpha-D-muramoyl-L-alanyl-D-glutamate-binding positions include Leu-27, Ser-29, and 44 to 46; that span reads HQA. 116 to 122 serves as a coordination point for ATP; sequence GTNGKTT. Residues Asn-157, 158–159, Ser-185, Gln-191, and Arg-193 each bind UDP-N-acetyl-alpha-D-muramoyl-L-alanyl-D-glutamate; that span reads TT. Lys-225 carries the N6-carboxylysine modification. Residues Arg-390, 414 to 417, Gly-465, and Glu-469 contribute to the meso-2,6-diaminopimelate site; that span reads DNPR. Residues 414-417 carry the Meso-diaminopimelate recognition motif motif; the sequence is DNPR.

Belongs to the MurCDEF family. MurE subfamily. Requires Mg(2+) as cofactor. In terms of processing, carboxylation is probably crucial for Mg(2+) binding and, consequently, for the gamma-phosphate positioning of ATP.

Its subcellular location is the cytoplasm. It catalyses the reaction UDP-N-acetyl-alpha-D-muramoyl-L-alanyl-D-glutamate + meso-2,6-diaminopimelate + ATP = UDP-N-acetyl-alpha-D-muramoyl-L-alanyl-gamma-D-glutamyl-meso-2,6-diaminopimelate + ADP + phosphate + H(+). Its pathway is cell wall biogenesis; peptidoglycan biosynthesis. In terms of biological role, catalyzes the addition of meso-diaminopimelic acid to the nucleotide precursor UDP-N-acetylmuramoyl-L-alanyl-D-glutamate (UMAG) in the biosynthesis of bacterial cell-wall peptidoglycan. The protein is UDP-N-acetylmuramoyl-L-alanyl-D-glutamate--2,6-diaminopimelate ligase of Escherichia coli O6:H1 (strain CFT073 / ATCC 700928 / UPEC).